The following is a 74-amino-acid chain: Putative Fe(2+) transport protein A (74 aa).

It belongs to the FeoA family.

In terms of biological role, might be involved in Fe(2+) ion uptake. This chain is Putative Fe(2+) transport protein A, found in Campylobacter jejuni subsp. jejuni serotype O:2 (strain ATCC 700819 / NCTC 11168).